The primary structure comprises 104 residues: MQPNEITFYQRFEADILAGRKTITIRDKSESHFKAGDILRVGRFEDNQYFCTIEVLSVSPITLDELTEQHAKQENMGLDKLKEVIKTIYPNEHESWIINFKLIG.

An ASCH domain is found at 6-96; it reads ITFYQRFEAD…TIYPNEHESW (91 aa). Catalysis depends on Lys21, which acts as the Proton acceptor. Thr24 acts as the Nucleophile in catalysis. Glu74 acts as the Proton donor in catalysis.

Belongs to the N(4)-acetylcytidine amidohydrolase family.

The catalysed reaction is N(4)-acetylcytidine + H2O = cytidine + acetate + H(+). It catalyses the reaction N(4)-acetyl-2'-deoxycytidine + H2O = 2'-deoxycytidine + acetate + H(+). The enzyme catalyses N(4)-acetylcytosine + H2O = cytosine + acetate + H(+). In terms of biological role, catalyzes the hydrolysis of N(4)-acetylcytidine (ac4C). The polypeptide is N(4)-acetylcytidine amidohydrolase (Haemophilus influenzae (strain 86-028NP)).